Here is a 316-residue protein sequence, read N- to C-terminus: D-alanine--D-alanine ligase (316 aa).

Residues 109-304 (KRLWRGMDLP…FDEMVLQILA (196 aa)) enclose the ATP-grasp domain. 135-190 (AADLGLPLIVKPAREGSSLGMMKVESIEALQSAYREAVIFDTAVFAERWLPGAEYT) is an ATP binding site. Residues Asp258, Glu271, and Asn273 each contribute to the Mg(2+) site.

This sequence belongs to the D-alanine--D-alanine ligase family. Mg(2+) serves as cofactor. It depends on Mn(2+) as a cofactor.

Its subcellular location is the cytoplasm. The enzyme catalyses 2 D-alanine + ATP = D-alanyl-D-alanine + ADP + phosphate + H(+). The protein operates within cell wall biogenesis; peptidoglycan biosynthesis. Cell wall formation. In Nitrosococcus oceani (strain ATCC 19707 / BCRC 17464 / JCM 30415 / NCIMB 11848 / C-107), this protein is D-alanine--D-alanine ligase.